Consider the following 163-residue polypeptide: NADH-quinone oxidoreductase subunit I (163 aa).

4Fe-4S ferredoxin-type domains are found at residues 53–83 (LRRYPNGEERCIACKLCEAICPALAITIEAG) and 94–123 (TRYDIDMTKCIYCGLCQEACPVDAIVEGPN). [4Fe-4S] cluster contacts are provided by cysteine 63, cysteine 66, cysteine 69, cysteine 73, cysteine 103, cysteine 106, cysteine 109, and cysteine 113.

Belongs to the complex I 23 kDa subunit family. NDH-1 is composed of 14 different subunits. Subunits NuoA, H, J, K, L, M, N constitute the membrane sector of the complex. The cofactor is [4Fe-4S] cluster.

Its subcellular location is the cell inner membrane. It catalyses the reaction a quinone + NADH + 5 H(+)(in) = a quinol + NAD(+) + 4 H(+)(out). In terms of biological role, NDH-1 shuttles electrons from NADH, via FMN and iron-sulfur (Fe-S) centers, to quinones in the respiratory chain. The immediate electron acceptor for the enzyme in this species is believed to be ubiquinone. Couples the redox reaction to proton translocation (for every two electrons transferred, four hydrogen ions are translocated across the cytoplasmic membrane), and thus conserves the redox energy in a proton gradient. The chain is NADH-quinone oxidoreductase subunit I from Parvibaculum lavamentivorans (strain DS-1 / DSM 13023 / NCIMB 13966).